Reading from the N-terminus, the 29-residue chain is Cliotide T18 (29 aa).

The cyclopeptide (Gly-Asn) cross-link spans 1–29; that stretch reads GLPICGETCFTGTCYTPGCTCSYPVCKKN. Cystine bridges form between Cys-5–Cys-19, Cys-9–Cys-21, and Cys-14–Cys-26.

Contains 3 disulfide bonds. Post-translationally, this is a cyclic peptide. In terms of tissue distribution, expressed in root nodules but not in seed.

In terms of biological role, probably participates in a plant defense mechanism. The chain is Cliotide T18 from Clitoria ternatea (Butterfly pea).